Reading from the N-terminus, the 1462-residue chain is Protein peg1 (1462 aa).

2 disordered regions span residues 528 to 563 (SFSK…SRER) and 573 to 592 (FHST…SIAI). 2 stretches are compositionally biased toward low complexity: residues 538 to 552 (SSNS…RLGL) and 574 to 589 (HSTS…HSPS). Residue S599 is modified to Phosphoserine. The interval 838–928 (SSTHQEHLSK…NCSEESLDDH (91 aa)) is disordered. A compositionally biased stretch (low complexity) spans 847–866 (KNLPTLNTSSSSNSSQTDLL). Basic and acidic residues predominate over residues 870–896 (GKGETKETEMQSPIESKEGLLSKDTHI). S1221 bears the Phosphoserine mark. Positions 1342 to 1367 (TLIAEIADLQGLYEFTQQRLQSLNTE) form a coiled coil.

This sequence belongs to the CLASP family. In terms of assembly, interacts with microtubules. Interacts with dhc1, mal3 and tea1.

The protein localises to the cytoplasm. It is found in the cytoskeleton. Its subcellular location is the spindle. The protein resides in the microtubule organizing center. It localises to the spindle pole body. Microtubule binding protein that regulates the stability of dynamic microtubules. Required for mitotic spindle formation. In Schizosaccharomyces pombe (strain 972 / ATCC 24843) (Fission yeast), this protein is Protein peg1 (peg1).